The following is a 575-amino-acid chain: Hemagglutinin-neuraminidase (575 aa).

Over 1–34 (MAEKGKTNSSYWSTTRNDNSTVNTYIDTPAGKTH) the chain is Intravirion. A helical membrane pass occupies residues 35–55 (IWLLIATTMHTILSFIIMILC). The Virion surface portion of the chain corresponds to 56–575 (IDLIIKQDTC…SIPKICKITS (520 aa)). N-linked (GlcNAc...) asparagine; by host glycosylation is present at Asn-77. Cystine bridges form between Cys-192–Cys-216, Cys-258–Cys-271, Cys-357–Cys-469, and Cys-463–Cys-473. The segment at 254 to 259 (NRKSCS) is involved in neuraminidase activity. Residues Asn-499 and Asn-511 are each glycosylated (N-linked (GlcNAc...) asparagine; by host). Cys-535 and Cys-544 form a disulfide bridge.

The protein belongs to the paramyxoviruses hemagglutinin-neuraminidase family. Homotetramer; composed of disulfide-linked homodimers. Interacts with F protein trimer.

The protein resides in the virion membrane. The protein localises to the host cell membrane. The catalysed reaction is Hydrolysis of alpha-(2-&gt;3)-, alpha-(2-&gt;6)-, alpha-(2-&gt;8)- glycosidic linkages of terminal sialic acid residues in oligosaccharides, glycoproteins, glycolipids, colominic acid and synthetic substrates.. Its function is as follows. Attaches the virus to sialic acid-containing cell receptors and thereby initiating infection. Binding of HN protein to the receptor induces a conformational change that allows the F protein to trigger virion/cell membranes fusion. Neuraminidase activity ensures the efficient spread of the virus by dissociating the mature virions from the neuraminic acid containing glycoproteins. This Human parainfluenza 1 virus (strain Washington/1957) (HPIV-1) protein is Hemagglutinin-neuraminidase (HN).